Consider the following 146-residue polypeptide: Large ribosomal subunit protein uL15 (146 aa).

A disordered region spans residues 1–66; it reads MKLHELKPAP…LQRRMPKRGF (66 aa). 2 stretches are compositionally biased toward gly residues: residues 21–31 and 42–52; these read QGIGSGMGKTA and SGGGVRPGFEG.

This sequence belongs to the universal ribosomal protein uL15 family. In terms of assembly, part of the 50S ribosomal subunit.

In terms of biological role, binds to the 23S rRNA. The sequence is that of Large ribosomal subunit protein uL15 from Pelotomaculum thermopropionicum (strain DSM 13744 / JCM 10971 / SI).